The chain runs to 264 residues: Phosphate import ATP-binding protein PstB (264 aa).

In terms of domain architecture, ABC transporter spans 11–250; it reads LKAEALSVYY…DTTEKIFDSP (240 aa). An ATP-binding site is contributed by 43-50; sequence GPSGCGKS.

Belongs to the ABC transporter superfamily. Phosphate importer (TC 3.A.1.7) family. In terms of assembly, the complex is composed of two ATP-binding proteins (PstB), two transmembrane proteins (PstC and PstA) and a solute-binding protein (PstS).

Its subcellular location is the cell inner membrane. It catalyses the reaction phosphate(out) + ATP + H2O = ADP + 2 phosphate(in) + H(+). In terms of biological role, part of the ABC transporter complex PstSACB involved in phosphate import. Responsible for energy coupling to the transport system. The chain is Phosphate import ATP-binding protein PstB from Synechococcus elongatus (strain ATCC 33912 / PCC 7942 / FACHB-805) (Anacystis nidulans R2).